The sequence spans 1807 residues: Vitellogenin-A2 (1807 aa).

The signal sequence occupies residues 1-15; sequence MKGIVLALLLALAGS. The region spanning 24-664 is the Vitellogenin domain; the sequence is FSESKISVYN…SANTMFPVFI (641 aa). A disordered region spans residues 953–974; it reads TSAEGASMMEDSSEMGPKKYSA. A glycan (N-linked (GlcNAc...) asparagine) is linked at N1094. Residues 1095 to 1320 are disordered; that stretch reads ETALYRSKQK…SSESSSSSSE (226 aa). A compositionally biased stretch (basic residues) spans 1101–1111; the sequence is SKQKKKNKIHN. Over residues 1112-1123 the composition is skewed to basic and acidic residues; it reads RRLDAEVVEARK. Residues 1126-1163 are compositionally biased toward low complexity; that stretch reads SSLSSSSSSSSSSSSSSSSSSSSSSSSSPSSSSSSSYS. The segment covering 1187 to 1198 has biased composition (basic and acidic residues); that stretch reads QNKKRNLQENRK. Residues 1205-1232 show a composition bias toward low complexity; that stretch reads SSSSSSSSSSSSSSSSSSSSSSSSSSSS. Basic and acidic residues predominate over residues 1233 to 1247; it reads EENRPHKNRQHDNKQ. 2 stretches are compositionally biased toward low complexity: residues 1263–1276 and 1309–1320; these read SESS…SSSE and SSSSESSSSSSE. The VWFD domain occupies 1536 to 1714; the sequence is GECKVAQDQI…SWILPAESCS (179 aa). Cystine bridges form between C1538/C1677 and C1561/C1713.

In terms of tissue distribution, produced by the liver, secreted into the blood and then sequestered by receptor mediated endocytosis into growing oocytes, where it is generally cleaved, giving rise to the respective yolk components.

In terms of biological role, precursor of the major egg-yolk proteins that are sources of nutrients during early development of oviparous organisms. This chain is Vitellogenin-A2, found in Xenopus laevis (African clawed frog).